A 297-amino-acid chain; its full sequence is MEEVVGGGKERKRPRGALVGVGGGGESAATAAAWRTSRVARAAAGGKDRHSKVVTSRGLRDRRVRLSVPTAIAFYDIQDRLGVDQPSKAIEWLIRAAAAAIDALPSLDCSFALPAAASSPPPPAADDAEVSTSETSKSSVLSLANAPCDNGGGAFAELLHCSNTNGSKPLQQQQQATLAYYAAAQSAHMAAPMSFEVMAMPPHLAFSQEQQQHATVAAFDRGTLQSNASLWPPPPQPPPSQHPFLLQRFAAAPAEVAGLPFFLAGGVGGAAAAAPAATTNGGERRLQLWDFKEERKT.

A disordered region spans residues 1-22 (MEEVVGGGKERKRPRGALVGVG). The 59-residue stretch at 46 to 104 (GKDRHSKVVTSRGLRDRRVRLSVPTAIAFYDIQDRLGVDQPSKAIEWLIRAAAAAIDAL) folds into the TCP domain. Disordered stretches follow at residues 116–136 (AASS…SETS) and 273–297 (AAPA…ERKT). Basic and acidic residues predominate over residues 282–297 (GERRLQLWDFKEERKT).

As to quaternary structure, forms homodimers and heterodimers.

It is found in the nucleus. Its function is as follows. Transcription activator. Binds the promoter core sequence 5'-GGNCC-3'. The chain is Transcription factor PCF8 (PCF8) from Oryza sativa subsp. indica (Rice).